Consider the following 249-residue polypeptide: Pyridoxine 5'-phosphate synthase (249 aa).

Position 7 (Asn-7) interacts with 3-amino-2-oxopropyl phosphate. Residue 9-10 (DH) participates in 1-deoxy-D-xylulose 5-phosphate binding. Arg-18 is a 3-amino-2-oxopropyl phosphate binding site. The Proton acceptor role is filled by His-43. 1-deoxy-D-xylulose 5-phosphate-binding residues include Arg-45 and His-50. Glu-70 serves as the catalytic Proton acceptor. Residue Thr-100 participates in 1-deoxy-D-xylulose 5-phosphate binding. The active-site Proton donor is His-190. Residues Gly-191 and 212-213 (GH) each bind 3-amino-2-oxopropyl phosphate.

Belongs to the PNP synthase family. Homooctamer; tetramer of dimers.

The protein resides in the cytoplasm. It carries out the reaction 3-amino-2-oxopropyl phosphate + 1-deoxy-D-xylulose 5-phosphate = pyridoxine 5'-phosphate + phosphate + 2 H2O + H(+). The protein operates within cofactor biosynthesis; pyridoxine 5'-phosphate biosynthesis; pyridoxine 5'-phosphate from D-erythrose 4-phosphate: step 5/5. Catalyzes the complicated ring closure reaction between the two acyclic compounds 1-deoxy-D-xylulose-5-phosphate (DXP) and 3-amino-2-oxopropyl phosphate (1-amino-acetone-3-phosphate or AAP) to form pyridoxine 5'-phosphate (PNP) and inorganic phosphate. The polypeptide is Pyridoxine 5'-phosphate synthase (Synechococcus sp. (strain CC9605)).